We begin with the raw amino-acid sequence, 521 residues long: CDP-diacylglycerol--glycerol-3-phosphate 3-phosphatidyltransferase (521 aa).

91–98 (ASLYLGKS) serves as a coordination point for ATP. PLD phosphodiesterase domains are found at residues 177–203 (GLGLQHMKIYGFDNEVILSGANLSNDY) and 419–457 (NGWSYHAKGIWLSARDKNDANNWKPFITVIGSSNYTRRA). Active-site residues include H182, K184, and D189.

This sequence belongs to the CDP-alcohol phosphatidyltransferase class-II family.

The protein resides in the mitochondrion. It carries out the reaction a CDP-1,2-diacyl-sn-glycerol + sn-glycerol 3-phosphate = a 1,2-diacyl-sn-glycero-3-phospho-(1'-sn-glycero-3'-phosphate) + CMP + H(+). It participates in phospholipid metabolism; phosphatidylglycerol biosynthesis; phosphatidylglycerol from CDP-diacylglycerol: step 1/2. Its function is as follows. Essential for the viability of mitochondrial petite mutant. Catalyzes the committed step to the synthesis of the acidic phospholipids. This Saccharomyces cerevisiae (strain ATCC 204508 / S288c) (Baker's yeast) protein is CDP-diacylglycerol--glycerol-3-phosphate 3-phosphatidyltransferase (PGS1).